A 1006-amino-acid polypeptide reads, in one-letter code: Unconventional myosin-Id (1006 aa).

An N-acetylalanine modification is found at Ala-2. The region spanning 9-695 is the Myosin motor domain; it reads FGKADFVLMD…TLFTLEELRA (687 aa). 102 to 109 lines the ATP pocket; that stretch reads GESGAGKT. Ser-200 is modified (phosphoserine). Position 536 is a phosphotyrosine (Tyr-536). The interval 572–594 is actin-binding; that stretch reads MIALVDNLASKEPYYVRCIKPND. IQ domains are found at residues 699 to 719 and 721 to 741; these read VRVV…MRYK and TKAA…SYIH. In terms of domain architecture, TH1 spans 812-1005; it reads GQRADLGLQR…RSGFILSVPG (194 aa).

This sequence belongs to the TRAFAC class myosin-kinesin ATPase superfamily. Myosin family. As to quaternary structure, interacts (via the two IQ motifs) with calmodulin. Binds an additional calmodulin chain via a third, C-terminal region. Interacts with F-actin. As to expression, detected in enterocytes at the intestinal brush border membrane. Detected at the tip of intestinal microvilli (at protein level).

It is found in the cytoplasm. The protein localises to the perikaryon. The protein resides in the cell projection. Its subcellular location is the dendrite. It localises to the early endosome. It is found in the cell cortex. The protein localises to the basolateral cell membrane. Functionally, unconventional myosin that functions as actin-based motor protein with ATPase activity. Plays a role in endosomal protein trafficking, and especially in the transfer of cargo proteins from early to recycling endosomes. Required for normal planar cell polarity in ciliated tracheal cells, for normal rotational polarity of cilia, and for coordinated, unidirectional ciliary movement in the trachea. Required for normal, polarized cilia organization in brain ependymal epithelial cells. This chain is Unconventional myosin-Id, found in Mus musculus (Mouse).